Here is a 349-residue protein sequence, read N- to C-terminus: Glycerol-3-phosphate dehydrogenase [NAD(P)+] (349 aa).

NADPH contacts are provided by Trp16, Arg36, and Lys110. Residues Lys110, Gly138, and Thr140 each coordinate sn-glycerol 3-phosphate. Ala142 is an NADPH binding site. Residues Lys193, Asp246, Ser256, Arg257, and Asn258 each coordinate sn-glycerol 3-phosphate. Lys193 functions as the Proton acceptor in the catalytic mechanism. Arg257 contributes to the NADPH binding site. Residues Val281 and Glu283 each contribute to the NADPH site.

This sequence belongs to the NAD-dependent glycerol-3-phosphate dehydrogenase family.

It is found in the cytoplasm. The catalysed reaction is sn-glycerol 3-phosphate + NAD(+) = dihydroxyacetone phosphate + NADH + H(+). The enzyme catalyses sn-glycerol 3-phosphate + NADP(+) = dihydroxyacetone phosphate + NADPH + H(+). The protein operates within membrane lipid metabolism; glycerophospholipid metabolism. In terms of biological role, catalyzes the reduction of the glycolytic intermediate dihydroxyacetone phosphate (DHAP) to sn-glycerol 3-phosphate (G3P), the key precursor for phospholipid synthesis. This chain is Glycerol-3-phosphate dehydrogenase [NAD(P)+], found in Rhodospirillum rubrum (strain ATCC 11170 / ATH 1.1.1 / DSM 467 / LMG 4362 / NCIMB 8255 / S1).